A 318-amino-acid polypeptide reads, in one-letter code: Type II methyltransferase M.HaeII (318 aa).

The SAM-dependent MTase C5-type domain maps to 4 to 304 (YKTIDLFAGI…GSMINSLNMA (301 aa)). Cys-73 is an active-site residue.

It belongs to the class I-like SAM-binding methyltransferase superfamily. C5-methyltransferase family.

It catalyses the reaction a 2'-deoxycytidine in DNA + S-adenosyl-L-methionine = a 5-methyl-2'-deoxycytidine in DNA + S-adenosyl-L-homocysteine + H(+). Its function is as follows. A methylase, recognizes the double-stranded sequence 5'-RGCGCY-3', methylates C-? on both strands, and protects the DNA from cleavage by the HaeII endonuclease. The polypeptide is Type II methyltransferase M.HaeII (haeIIM) (Haemophilus aegyptius).